A 191-amino-acid polypeptide reads, in one-letter code: Large ribosomal subunit protein bL9 (191 aa).

The interval 149 to 191 (EEAERQSKGESLTSADAIYGVDEDALRPEDFFDPEADGNEDDE) is disordered. Positions 179–191 (FFDPEADGNEDDE) are enriched in acidic residues.

The protein belongs to the bacterial ribosomal protein bL9 family.

In terms of biological role, binds to the 23S rRNA. This is Large ribosomal subunit protein bL9 (rplI) from Agrobacterium fabrum (strain C58 / ATCC 33970) (Agrobacterium tumefaciens (strain C58)).